A 276-amino-acid chain; its full sequence is MRSALLLACLLATASAFSVRSWLRRARAGDSEENAVLKSRHRYYLYRYAYPPLHRYKGSDSSEEEGDGSEEEEEGGAPSHAGTQAAGEGLTLGDVGPGGDAASAHQDCKGGQKGTRGDSGDEDSDEEEEEEEEEEEEEEVEEQDVSVNGTSTNTTAETPHGNNTVAAEEEEDDDEEEEEEEEEEEEAEATTAAATTAQDEVTTLGDEQRSEVTTAGEQWEYEVTVGARGDEGPTESSYGDQEEPARGDSYRAYEDEYGYYKGHGYDMYGQDYYYNQ.

The signal sequence occupies residues 1-16 (MRSALLLACLLATASA). The interval 54-251 (HRYKGSDSSE…EEPARGDSYR (198 aa)) is disordered. Over residues 61–75 (SSEEEGDGSEEEEEG) the composition is skewed to acidic residues. A compositionally biased stretch (basic and acidic residues) spans 106–119 (QDCKGGQKGTRGDS). Positions 116–118 (RGD) match the Cell attachment site motif. Over residues 120–144 (GDEDSDEEEEEEEEEEEEEEVEEQD) the composition is skewed to acidic residues. The span at 145–165 (VSVNGTSTNTTAETPHGNNTV) shows a compositional bias: polar residues. Residues N148, N153, and N162 are each glycosylated (N-linked (GlcNAc...) asparagine). The segment covering 167-188 (AEEEEDDDEEEEEEEEEEEEAE) has biased composition (acidic residues). The segment covering 189–200 (ATTAAATTAQDE) has biased composition (low complexity). Residues 228–230 (RGD) carry the Cell attachment site motif. Positions 246 to 248 (RGD) match the Integrin-binding motif motif. Sulfotyrosine occurs at positions 272 and 273.

In terms of assembly, monomer. Interacts with integrins; the interaction promotes cell adhesion. Post-translationally, phosphorylated on serine and threonine residues.

Its subcellular location is the secreted. Binds tightly to hydroxyapatite. Appears to form an integral part of the mineralized matrix. Probably important to cell-matrix interaction. Promotes adhesion and migration of various cells via the alpha-V/beta-3 integrin receptor (ITGAV:ITGB3). This is Integrin-binding sialoprotein (IBSP) from Gallus gallus (Chicken).